The following is a 359-amino-acid chain: MPLELELCPGRWVGGQHPCFIIAEIGQNHQGDLDVAKRMIRMAKECGADCAKFQKSELEFKFNRKALERPYTSKHSWGKTYGEHKRHLEFSHDQYRELQRYAEEVGIFFTASGMDEMAVEFLHELNVPFFKVGSGDTNNFPYLEKTAKKGRPMVISSGMQSMDTMKQVYQIVKPLNPNFCFLQCTSAYPLQPEDVNLRVISEYQKLFPDIPIGYSGHETGIAISVAAVALGAKVLERHITLDKTWKGSDHSASLEPGELAELVRSVRLVERALGSPTKQLLPCEMACNEKLGKSVVAKVKIPEGTILTMDMLTVKVGEPKGYPPEDIFNLVGKKVLVTVEEDDTIMEELVDNHGKKIKS.

Residues K61, K74, and K79 each carry the N6-acetyllysine modification. At S275 the chain carries Phosphoserine. N6-acetyllysine is present on K290. An AFP-like domain is found at 294-353 (SVVAKVKIPEGTILTMDMLTVKVGEPKGYPPEDIFNLVGKKVLVTVEEDDTIMEELVDNH).

In terms of tissue distribution, ubiquitous.

The enzyme catalyses aldehydo-N-acetyl-D-mannosamine 6-phosphate + phosphoenolpyruvate + H2O = N-acetylneuraminate 9-phosphate + phosphate. It catalyses the reaction aldehydo-D-mannose 6-phosphate + phosphoenolpyruvate + H2O = 3-deoxy-D-glycero-beta-D-galacto-non-2-ulopyranosonate 9-phosphate + phosphate. Its function is as follows. Catalyzes the condensation of phosphoenolpyruvate (PEP) and N-acetylmannosamine 6-phosphate (ManNAc-6-P) to synthesize N-acetylneuraminate-9-phosphate (Neu5Ac-9-P). Also catalyzes the condensation of PEP and D-mannose 6-phosphate (Man-6-P) to produce 3-deoxy-D-glycero-beta-D-galacto-non-2-ulopyranosonate 9-phosphate (KDN-9-P). Neu5Ac-9-P and KDN-9-P are the phosphorylated forms of sialic acids N-acetylneuraminic acid (Neu5Ac) and deaminoneuraminic acid (KDN), respectively. Required for brain and skeletal development. The protein is N-acetylneuraminate-9-phosphate synthase of Homo sapiens (Human).